Here is a 490-residue protein sequence, read N- to C-terminus: UDP-N-acetylmuramate--L-alanine ligase (490 aa).

133-139 (GTHGKTS) lines the ATP pocket.

It belongs to the MurCDEF family.

It localises to the cytoplasm. It catalyses the reaction UDP-N-acetyl-alpha-D-muramate + L-alanine + ATP = UDP-N-acetyl-alpha-D-muramoyl-L-alanine + ADP + phosphate + H(+). It participates in cell wall biogenesis; peptidoglycan biosynthesis. Functionally, cell wall formation. In Saccharopolyspora erythraea (strain ATCC 11635 / DSM 40517 / JCM 4748 / NBRC 13426 / NCIMB 8594 / NRRL 2338), this protein is UDP-N-acetylmuramate--L-alanine ligase.